Consider the following 480-residue polypeptide: Aspartyl/glutamyl-tRNA(Asn/Gln) amidotransferase subunit B (480 aa).

Belongs to the GatB/GatE family. GatB subfamily. Heterotrimer of A, B and C subunits.

It catalyses the reaction L-glutamyl-tRNA(Gln) + L-glutamine + ATP + H2O = L-glutaminyl-tRNA(Gln) + L-glutamate + ADP + phosphate + H(+). The catalysed reaction is L-aspartyl-tRNA(Asn) + L-glutamine + ATP + H2O = L-asparaginyl-tRNA(Asn) + L-glutamate + ADP + phosphate + 2 H(+). Its function is as follows. Allows the formation of correctly charged Asn-tRNA(Asn) or Gln-tRNA(Gln) through the transamidation of misacylated Asp-tRNA(Asn) or Glu-tRNA(Gln) in organisms which lack either or both of asparaginyl-tRNA or glutaminyl-tRNA synthetases. The reaction takes place in the presence of glutamine and ATP through an activated phospho-Asp-tRNA(Asn) or phospho-Glu-tRNA(Gln). The sequence is that of Aspartyl/glutamyl-tRNA(Asn/Gln) amidotransferase subunit B from Streptococcus agalactiae serotype Ia (strain ATCC 27591 / A909 / CDC SS700).